A 180-amino-acid polypeptide reads, in one-letter code: Large ribosomal subunit protein uL5c (180 aa).

The protein belongs to the universal ribosomal protein uL5 family. Part of the 50S ribosomal subunit; contacts the 5S rRNA.

The protein localises to the plastid. It localises to the chloroplast. Functionally, binds 5S rRNA, forms part of the central protuberance of the 50S subunit. The sequence is that of Large ribosomal subunit protein uL5c (rpl5) from Tetradesmus obliquus (Green alga).